We begin with the raw amino-acid sequence, 201 residues long: Probable calcium-binding protein CML15 (201 aa).

The disordered stretch occupies residues 1 to 55 (MGKVRAFFSRKGRGNSSGRSRSMREAAMNVDWSPRPSDLAAAAAAKPRPPAAEDE). 4 consecutive EF-hand domains span residues 51 to 86 (AAED…VGHA), 87 to 122 (VTDD…PPGD), 125 to 160 (AAEE…IGEA), and 161 to 196 (ATVA…GAGF). 18 residues coordinate Ca(2+): Asp-64, Asn-66, Asp-68, Arg-70, Glu-75, Asp-100, Asp-102, Asp-104, Tyr-106, Glu-111, Asp-138, Asp-140, Asn-142, Glu-149, Asp-174, Asn-176, Asp-178, and Glu-185.

Functionally, potential calcium sensor. The chain is Probable calcium-binding protein CML15 (CML15) from Oryza sativa subsp. japonica (Rice).